The primary structure comprises 129 residues: Small ribosomal subunit protein uS11 (129 aa).

Belongs to the universal ribosomal protein uS11 family. As to quaternary structure, part of the 30S ribosomal subunit. Interacts with proteins S7 and S18. Binds to IF-3.

Its function is as follows. Located on the platform of the 30S subunit, it bridges several disparate RNA helices of the 16S rRNA. Forms part of the Shine-Dalgarno cleft in the 70S ribosome. This Aromatoleum aromaticum (strain DSM 19018 / LMG 30748 / EbN1) (Azoarcus sp. (strain EbN1)) protein is Small ribosomal subunit protein uS11.